A 376-amino-acid polypeptide reads, in one-letter code: Neuropeptide receptor 3 (376 aa).

Topologically, residues 1 to 29 (MEGGRNCVMTVQQWQPEYNDMNQIRAIFS) are extracellular. The helical transmembrane segment at 30-50 (LLYLLVWVGAIVGNTLVLYVL) threads the bilayer. Residues 51 to 66 (TFNQVSLSVRTVFVGC) lie on the Cytoplasmic side of the membrane. A helical transmembrane segment spans residues 67–87 (LAGSDLLMCLFSLPITAISIF). Residues 88–89 (SR) are Extracellular-facing. The helical transmembrane segment at 90–110 (VWVFPAIFCKLIGVFQGGTIF) threads the bilayer. The cysteines at positions 98 and 175 are disulfide-linked. Residues 111-139 (VSSFTLTVIALDRCVLILRPNQEIVNFPR) are Cytoplasmic-facing. A helical membrane pass occupies residues 140–160 (AVFIVFCIWLLGYSLALPVGI). Residues 161 to 197 (YSDIAVYDEICGTFCEENWPDFNPDTGRSGIRRAYGL) are Extracellular-facing. A helical membrane pass occupies residues 198-218 (SVLVLQFGIPALISSICYWMI). Over 219–251 (SRVMSDQLARRRGHNIRPESETKLVNRKTRANR) the chain is Cytoplasmic. A helical transmembrane segment spans residues 252–272 (MMIVMVVGFVLAWMPFNAVNL). Residues 273–284 (YRDLFGISKWYS) are Extracellular-facing. Residues 285 to 305 (TVFALCHVCAMCSAVLNPIIY) traverse the membrane as a helical segment. The Cytoplasmic segment spans residues 306 to 376 (SWFNPQFRQS…NDYRAGDQLL (71 aa)).

It belongs to the G-protein coupled receptor 1 family.

It is found in the cell membrane. Its function is as follows. G-protein coupled receptor for flp-15 neuropeptides. Receptor activation assays suggest binding to predicted flp-15 peptides, GGPQGPLRF-NH2 and RGPSGPLRF-NH2. Likely involved in Gi/Go-coupled signaling pathways. This Caenorhabditis elegans protein is Neuropeptide receptor 3.